The primary structure comprises 344 residues: Type VI secretion system component TssA1 (344 aa).

As to quaternary structure, homododecamer. Interacts with TssB1 and TssC1. Interacts with TssK1 and TssF1.

Functionally, core component of the H1 type VI (H1-T6SS) secretion system that plays a role in the release of toxins targeting both eukaryotic and prokaryotic species. Forms a dodecameric ring-shaped structure located at one end of the T6SS sheath. May properly attach the pre-assembled sheath onto the baseplate and/or stabilize the sheaths tubular structure. The polypeptide is Type VI secretion system component TssA1 (Pseudomonas aeruginosa (strain ATCC 15692 / DSM 22644 / CIP 104116 / JCM 14847 / LMG 12228 / 1C / PRS 101 / PAO1)).